The primary structure comprises 93 residues: UPF0250 protein PSPA7_1111 (93 aa).

It belongs to the UPF0250 family.

This Pseudomonas paraeruginosa (strain DSM 24068 / PA7) (Pseudomonas aeruginosa (strain PA7)) protein is UPF0250 protein PSPA7_1111.